We begin with the raw amino-acid sequence, 365 residues long: NADH-quinone oxidoreductase subunit H 2 (365 aa).

A run of 8 helical transmembrane segments spans residues 1–21, 71–91, 100–120, 136–156, 199–219, 254–274, 301–321, and 342–362; these read MFVV…VVWA, LAPV…PFAP, VGVF…FLAG, IAQV…VVLI, FVSW…VFFI, ILFL…VVLF, IAGY…VVFL, and WKIL…WVVW.

Belongs to the complex I subunit 1 family. NDH-1 is composed of 14 different subunits. Subunits NuoA, H, J, K, L, M, N constitute the membrane sector of the complex.

It localises to the cell inner membrane. It catalyses the reaction a quinone + NADH + 5 H(+)(in) = a quinol + NAD(+) + 4 H(+)(out). NDH-1 shuttles electrons from NADH, via FMN and iron-sulfur (Fe-S) centers, to quinones in the respiratory chain. The immediate electron acceptor for the enzyme in this species is believed to be ubiquinone. Couples the redox reaction to proton translocation (for every two electrons transferred, four hydrogen ions are translocated across the cytoplasmic membrane), and thus conserves the redox energy in a proton gradient. This subunit may bind ubiquinone. This is NADH-quinone oxidoreductase subunit H 2 from Cytophaga hutchinsonii (strain ATCC 33406 / DSM 1761 / CIP 103989 / NBRC 15051 / NCIMB 9469 / D465).